The sequence spans 161 residues: Large ribosomal subunit protein uL10 (161 aa).

The protein belongs to the universal ribosomal protein uL10 family. Part of the ribosomal stalk of the 50S ribosomal subunit. The N-terminus interacts with L11 and the large rRNA to form the base of the stalk. The C-terminus forms an elongated spine to which L12 dimers bind in a sequential fashion forming a multimeric L10(L12)X complex.

In terms of biological role, forms part of the ribosomal stalk, playing a central role in the interaction of the ribosome with GTP-bound translation factors. This chain is Large ribosomal subunit protein uL10, found in Buchnera aphidicola subsp. Cinara cedri (strain Cc).